The following is a 349-amino-acid chain: Merozoite surface protein P38 (349 aa).

A signal peptide spans 1–21 (MKRWSIITGIVIIFCILTCKG). 6-Cys domains are found at residues 22–149 (QVEN…ISNG) and 153–301 (KIPG…YLTN). 4 cysteine pairs are disulfide-bonded: C77-C127, C157-C183, C197-C278, and C208-C276. N-linked (GlcNAc...) asparagine glycans are attached at residues N294, N295, and N301. N315 carries the GPI-anchor amidated asparagine lipid modification. The propeptide at 316 to 349 (SEIFERIEREEISFAFSSYLSITLILLYLFFLNF) is removed in mature form.

The protein localises to the cell surface. Its subcellular location is the cell membrane. This chain is Merozoite surface protein P38 (PFS38), found in Plasmodium falciparum (isolate 3D7).